Here is a 66-residue protein sequence, read N- to C-terminus: DNA gyrase inhibitor YacG (66 aa).

Zn(2+)-binding residues include Cys9, Cys12, Cys28, and Cys32. The tract at residues 45–66 is disordered; that stretch reads HKIAGSEESEDELYSGDLEPRH.

It belongs to the DNA gyrase inhibitor YacG family. As to quaternary structure, interacts with GyrB. The cofactor is Zn(2+).

Inhibits all the catalytic activities of DNA gyrase by preventing its interaction with DNA. Acts by binding directly to the C-terminal domain of GyrB, which probably disrupts DNA binding by the gyrase. This chain is DNA gyrase inhibitor YacG, found in Pseudomonas putida (strain ATCC 47054 / DSM 6125 / CFBP 8728 / NCIMB 11950 / KT2440).